We begin with the raw amino-acid sequence, 173 residues long: Photosystem I assembly protein Ycf3 (173 aa).

TPR repeat units follow at residues 35–68 (AFVY…EENP), 72–105 (SYIL…NPKM), and 120–153 (GEKA…APNN).

Belongs to the Ycf3 family.

Its subcellular location is the cellular thylakoid membrane. Functionally, essential for the assembly of the photosystem I (PSI) complex. May act as a chaperone-like factor to guide the assembly of the PSI subunits. This chain is Photosystem I assembly protein Ycf3, found in Synechocystis sp. (strain ATCC 27184 / PCC 6803 / Kazusa).